The chain runs to 256 residues: Pimeloyl-[acyl-carrier protein] methyl ester esterase (256 aa).

Residues 15 to 242 (HLVLLHGWGL…AAHAPFISHP (228 aa)) form the AB hydrolase-1 domain. Substrate-binding positions include W22, 82 to 83 (SL), and 143 to 147 (FLALQ). Catalysis depends on S82, which acts as the Nucleophile. Catalysis depends on residues D207 and H235. H235 is a substrate binding site.

This sequence belongs to the AB hydrolase superfamily. Carboxylesterase BioH family. Monomer.

It localises to the cytoplasm. The catalysed reaction is 6-carboxyhexanoyl-[ACP] methyl ester + H2O = 6-carboxyhexanoyl-[ACP] + methanol + H(+). Its pathway is cofactor biosynthesis; biotin biosynthesis. In terms of biological role, the physiological role of BioH is to remove the methyl group introduced by BioC when the pimeloyl moiety is complete. It allows to synthesize pimeloyl-ACP via the fatty acid synthetic pathway through the hydrolysis of the ester bonds of pimeloyl-ACP esters. This Escherichia coli O8 (strain IAI1) protein is Pimeloyl-[acyl-carrier protein] methyl ester esterase.